Here is a 1147-residue protein sequence, read N- to C-terminus: Nitric oxide synthase, inducible (1147 aa).

The tract at residues 22–51 is disordered; sequence KDINNNVEKTPGAIPSPTTQDDPKSHKHQN. Residues 23–27 carry the DINNN-motif; mediates interaction with SPSB1, SPSB2 and SPSB4 motif; that stretch reads DINNN. Residues C107 and C112 each contribute to the Zn(2+) site. Residue S115 coordinates (6R)-L-erythro-5,6,7,8-tetrahydrobiopterin. Residue C197 coordinates heme b. 4 residues coordinate L-arginine: Q260, W369, Y370, and E374. (6R)-L-erythro-5,6,7,8-tetrahydrobiopterin contacts are provided by R378, I459, W460, and F473. Residue Y488 coordinates heme b. The interval 512–532 is calmodulin-binding; the sequence is FTVLVKAVFFASVLMRKVMAS. The 139-residue stretch at 536–674 folds into the Flavodoxin-like domain; it reads ATVLFATETG…AFRSWAVQTF (139 aa). Residues T542, E543, T544, K546, and S547 each coordinate FMN. Position 564 is a phosphothreonine (T564). Y572 is modified (phosphotyrosine). Positions 588, 589, 625, 632, 658, and 662 each coordinate FMN. The region spanning 727–967 is the FAD-binding FR-type domain; the sequence is KNVFTMRLKS…VRSVSGFQLP (241 aa). R747 contributes to the NADP(+) binding site. FAD-binding residues include H769, R903, Y905, S906, T921, and A923. Position 926 (T926) interacts with NADP(+). Y927, V940, C941, and S942 together coordinate FAD. Positions 981, 1014, 1043, 1044, 1050, 1052, 1054, and 1087 each coordinate NADP(+).

Belongs to the NOS family. In terms of assembly, homodimer. Interacts with NHERF1. Interacts with GAPDH; induced by oxidatively-modified low-densitity lipoprotein (LDL(ox)). Interacts with S100A8 and S100A9 to form the iNOS-S100A8/9 transnitrosylase complex. Interacts with SPSB1, SPSB2 and SPSB4. Interacts with ELOC and CUL5 in the presence of SPSB1 or SPSB2 or SPSB4. Forms a complex with ASL, ASS1 and HSP90AA1; the complex regulates cell-autonomous L-arginine synthesis and citrulline recycling while channeling extracellular L-arginine to nitric oxide synthesis pathway. The cofactor is heme b. It depends on FAD as a cofactor. Requires FMN as cofactor. (6R)-L-erythro-5,6,7,8-tetrahydrobiopterin is required as a cofactor. Polyubiquitinated; mediated by SPSB1, SPSB2 and SPSB4, leading to proteasomal degradation. As to expression, in normal kidney, expressed primarily in the medullary thick ascending limb, with minor amounts in the medullary collecting duct and vasa recta bundle.

It localises to the cytoplasm. The protein localises to the cytosol. The enzyme catalyses 2 L-arginine + 3 NADPH + 4 O2 + H(+) = 2 L-citrulline + 2 nitric oxide + 3 NADP(+) + 4 H2O. Its activity is regulated as follows. Not stimulated by calcium/calmodulin. Aspirin inhibits expression and function of this enzyme and effects may be exerted at the level of translational/post-translational modification and directly on the catalytic activity. In terms of biological role, produces nitric oxide (NO) which is a messenger molecule with diverse functions throughout the body. In macrophages, NO mediates tumoricidal and bactericidal actions. Also has nitrosylase activity and mediates cysteine S-nitrosylation of cytoplasmic target proteins such PTGS2/COX2. As component of the iNOS-S100A8/9 transnitrosylase complex involved in the selective inflammatory stimulus-dependent S-nitrosylation of GAPDH implicated in regulation of the GAIT complex activity and probably multiple targets including ANXA5, EZR, MSN and VIM. Involved in inflammation, enhances the synthesis of pro-inflammatory mediators such as IL6 and IL8. In Rattus norvegicus (Rat), this protein is Nitric oxide synthase, inducible (Nos2).